The chain runs to 494 residues: Alpha-amylase 2 (494 aa).

The N-terminal stretch at 1–18 (MFLAKSIVCLALLAVANA) is a signal peptide. A disulfide bridge links C46 with C102. Ca(2+) is bound by residues N116, R165, and D174. Cysteines 153 and 167 form a disulfide. R202 is a binding site for chloride. D204 acts as the Nucleophile in catalysis. H208 is a binding site for Ca(2+). E241 (proton donor) is an active-site residue. Chloride is bound by residues N304 and R343. The disordered stretch occupies residues 350 to 370 (FTDTDQGPPTTDGQNIASPSF). A compositionally biased stretch (low complexity) spans 351-363 (TDTDQGPPTTDGQ). 2 disulfide bridges follow: C376–C382 and C448–C460.

Belongs to the glycosyl hydrolase 13 family. In terms of assembly, monomer. Ca(2+) is required as a cofactor. The cofactor is chloride.

The catalysed reaction is Endohydrolysis of (1-&gt;4)-alpha-D-glucosidic linkages in polysaccharides containing three or more (1-&gt;4)-alpha-linked D-glucose units.. The chain is Alpha-amylase 2 (Amy58) from Drosophila ananassae (Fruit fly).